A 419-amino-acid polypeptide reads, in one-letter code: MGFPRILSKNHKIYTKLGEFCLSGDSFWIVCHTCQEELQTQDAFWKHIQDEHNFLHGVAKQEHNRSSSSSYCLADVESASAVTSNTTSVQTAGNVTTVAVPVALYKYTEDEQRDVAAAVELHEAQHQQQQQQQQHQQQQQQQQHQQQQQHQHHQHQQQQQHLHQQQQQQQQQQRDAAKELAELHAVAAAAAAAGGGGGDSSAHSSSIGGGIDIKVELTPEMQVAAAAAAAASSNTTIYHLSQVVPVSAPAPPPPPPTAAAASSFLSGGAGSATAATIVGVSTTATTTAAAAAAVTTVPQQSQLGSGNNAGAVMQQLGLPLIAVAQELAPKDSNSTTASASSAVSSDDGERWYVCDYGTCGIKFKYKSRMELHRVVHSKERRFNCDMCSASFKQSCNLSTHRKKKHSLRGIKSDLLPQRF.

The C2H2-type 1 zinc finger occupies 29–52 (IVCHTCQEELQTQDAFWKHIQDEH). The segment at 121–179 (LHEAQHQQQQQQQQHQQQQQQQQHQQQQQHQHHQHQQQQQHLHQQQQQQQQQQRDAAKE) is disordered. Composition is skewed to low complexity over residues 126–149 (HQQQQQQQQHQQQQQQQQHQQQQQ) and 156–173 (QQQQQHLHQQQQQQQQQQ). 2 C2H2-type zinc fingers span residues 352–376 (YVCDYGTCGIKFKYKSRMELHRVVH) and 382–405 (FNCDMCSASFKQSCNLSTHRKKKH).

It is found in the nucleus. Its function is as follows. May be a transcription factor for genes having (A+T) stretches in their promoter and/or enhancer regions. Binds to AT rich DNA. The polypeptide is AT-rich binding protein (Drosophila grimshawi (Hawaiian fruit fly)).